The following is an 893-amino-acid chain: MSGHDSKYFSTTKKGEIPELKEELNSQYKDKRKDAVKKVIAAMTVGKDVSSLFTDVVNCMQTENLELKKLVYLYLINYAKSQPDLAILAVNTFVKDSQDPNPLIRALAVRTMGCIRVDKITEYLCDPLQKCLKDDDPYVRKTAAICVAKLFDINAELVEDRGFLEALKDLISDNNPMVVANAVAALAEIQENSTSPIFEINSTILTKLLTALNECTEWGQVFILDALSRYKASDPREAENIVERVTPRLQHANCAVVLSAVKMILQQMELITSTDVIRNLCKKMAPPLVTLLSAEPEIQYVALRNINLIVQKRPTILAHEIKVFFCKYNDPIYVKMEKLEIMIKLASDRNIDQVLLEFKEYATEVDVDFVRKAVRAIGRCAIKLERAAERCISVLLELIKIKVNYVVQEAIIVIKDIFRRYPNTYESIIATLCESLDTLDEPEAKASMIWIIGEYAERIDNADELLESFLENFPEEPAQVQLQLLTATVKLFLKKPTEGPQQMIQVVLNNATVETDNPDLRDRAYIYWRLLSTDPEAAKDVVLAEKPVITDDSNQLDPSLLDELLANISTLSSVYHKPPEAFVTRLKTTVQKTEDEDYVEGSETGYPEASGNPVDGAASPSATTGYVTKLAAAPAPVPDLLGDLMGSDNAAIVPVDEPTTPSGRPLPVVLPASKGQGLQISAQLTRQDGQVFYSMLLENNSQSLLDGFMIQFNKNSFGLAAVGSLQVPPLQPGASARTMMPMVLSQNMSTGSTSSVLQVAVKNNQQPVWYFEDKIVLNALFSEDGRMERGTFLETWKSLPDSNEVQKEFPGITITSVESTLDLLAASNMFFIAKRKNGNQDVLYLSAKVPRGIPFLIELTAIVGQPGLKCAVKTPTPEIAPLFFEAVEILFKA.

The tract at residues 593-621 (TEDEDYVEGSETGYPEASGNPVDGAASPS) is disordered.

Belongs to the adaptor complexes large subunit family. Adaptor protein complexes are heterotetramers composed of two large adaptins (beta-type subunit and alpha-type or delta-type or epsilon-type or gamma-type subunit), a medium adaptin (mu-type subunit) and a small adaptin (sigma-type subunit).

It localises to the golgi apparatus. Its subcellular location is the trans-Golgi network. It is found in the cytoplasmic vesicle. The protein resides in the clathrin-coated vesicle membrane. Subunit of clathrin-associated adaptor protein complex that plays a role in protein sorting in the late-Golgi/trans-Golgi network (TGN) and/or endosomes. The AP complexes mediate both the recruitment of clathrin to membranes and the recognition of sorting signals within the cytosolic tails of transmembrane cargo molecules. The chain is Beta-adaptin-like protein C (BETAC-AD) from Arabidopsis thaliana (Mouse-ear cress).